Reading from the N-terminus, the 237-residue chain is Ribonuclease PH (237 aa).

Residues arginine 86 and 124–126 (GTR) each bind phosphate.

Belongs to the RNase PH family. As to quaternary structure, homohexameric ring arranged as a trimer of dimers.

The catalysed reaction is tRNA(n+1) + phosphate = tRNA(n) + a ribonucleoside 5'-diphosphate. Phosphorolytic 3'-5' exoribonuclease that plays an important role in tRNA 3'-end maturation. Removes nucleotide residues following the 3'-CCA terminus of tRNAs; can also add nucleotides to the ends of RNA molecules by using nucleoside diphosphates as substrates, but this may not be physiologically important. Probably plays a role in initiation of 16S rRNA degradation (leading to ribosome degradation) during starvation. This chain is Ribonuclease PH, found in Idiomarina loihiensis (strain ATCC BAA-735 / DSM 15497 / L2-TR).